A 517-amino-acid chain; its full sequence is Ribonuclease Y (517 aa).

A helical membrane pass occupies residues 1-21 (MIESLIALIAAIVGLGIGYLV). The KH domain occupies 207–273 (LINVINIKND…TKVIELLVED (67 aa)). Residues 333–426 (ALAHSLEVAH…VCAADTLSAA (94 aa)) form the HD domain.

Belongs to the RNase Y family.

It is found in the cell membrane. Functionally, endoribonuclease that initiates mRNA decay. The chain is Ribonuclease Y from Campylobacter jejuni subsp. jejuni serotype O:2 (strain ATCC 700819 / NCTC 11168).